The sequence spans 1216 residues: MFGAGDEDDTDFLSPSGGAKLASLFGLDQATMGHGNEFFQYTAPKQPKKGQGTAAGNQTAPKPAPATTGTSSVLFATAVHAYRYINGQYAKQGKFGAAVLGNHTSREYRILLYISQQQPVTVATIHLNFELMVRPNNYSTFYDDQRQNWSIMFESEKAAVSFNKQVCVAKCNSISSLDAVLCQDLVAAEGPAVETGDSLEVAYTGWLLQNHVLGQVFDSTANKDKPLRLKLGSGKVVKGLEDGLLGMKKGGKRLIITPSACAAGSEGVIGWTQPTDSILVFEVEVRRVKFARDSGSDGHSVSSRDSAAPSPIPASDSLSADPVVTPLPLPLKPGEPGLRSKSNSLSEQLTVNSNPDTVKAKLISRMAKMGQPMLPILPPQLDSNDSETEDATVLRGAGQSLVTPSIQPSLQPAHPVLPQMASQAPQPSGSGLQTPSAALMQAVSLDSHSAVSGNAQNFQPYAGVQAYAYPQTPSVTSQLQPVRPLYPAPLSQAPHFQGSGDMMSFLMTEARQHNTEIRMAVNKVADKMDHLMTKVEELQKHSSGNSMLLPSMSVTMETSMIMSNIQRIIQENERLKQELLEKSSRIEEQNDKISDLIERNQRYVEQSNLMMEKRNNSLQTATENTQARILHAEQEKAKVTEELAAATAQVSHLQLKMTAHQKKETELQLQLTDNLKETDLLRGHVTRLQADLSELREASEQTQTKFKSEKQSRRQLELKVTSLEEELTDLRAEKTSLEKNLSERKKKSAQERCQAEAEMDEIRKSHQEELDRLRQLLKKARVSTDQAAAEQLTLAQAELQSQWEAKCEQLLASARDEHLQQYREVCAQRDAHQQKLALLQDECLALQAQIAAFTEQKEHMQRLEKTKSQAPAGRAAADPSEKVKKIMNQVFQSLRGEFELEESYDGGTILRTIMHTIKMVTLQLLNHQEEEEEEEEEEEEEKKPLRPSLEQPGPATPGMPPAPPSGETQEAPEVLPEQVVGETTPLPLQALPTPENGAQTRKGEPAEAEVPSEIKDSSLPPQPAGIPAHRVLGPPTSIPPKPPGPVTMDSESEEMLAADQRTVQPNGLLGEEHVREVATDGLLQGNSRRLSLTPDPEKGEPPALDPESQGGEAQPPECKQAEDVSSSGPRETLLDTELASAAAGTSLRHNQDSQHCSLSGDEEDELFKGATLKVPRPTAQPEEEDEDEVSMKGRPPPTPLFGDDDDDDDDDIGWLG.

An N-acetylmethionine modification is found at methionine 1. Phosphoserine is present on residues serine 14 and serine 23. Residues 41–68 (YTAPKQPKKGQGTAAGNQTAPKPAPATT) form a disordered region. Over residues 59-68 (TAPKPAPATT) the composition is skewed to low complexity. The interval 71–168 (SSVLFATAVH…AVSFNKQVCV (98 aa)) is important for function in growth cone organization. An N6-acetyllysine modification is found at lysine 91. Residues 196-289 (GDSLEVAYTG…VFEVEVRRVK (94 aa)) enclose the PPIase FKBP-type domain. A disordered region spans residues 292–357 (RDSGSDGHSV…QLTVNSNPDT (66 aa)). A compositionally biased stretch (low complexity) spans 303–322 (SRDSAAPSPIPASDSLSADP). A phosphoserine mark is found at serine 306, serine 310, serine 342, serine 344, and serine 617. Positions 340–356 (SKSNSLSEQLTVNSNPD) are enriched in polar residues. Coiled-coil stretches lie at residues 519–790 (MAVN…AAAE) and 820–865 (QQYR…RLEK). The disordered stretch occupies residues 927–1216 (HQEEEEEEEE…DDDDDIGWLG (290 aa)). Over residues 929-940 (EEEEEEEEEEEE) the composition is skewed to acidic residues. A Phosphoserine modification is found at serine 948. The span at 954-964 (PATPGMPPAPP) shows a compositional bias: pro residues. Residues 983 to 994 (TTPLPLQALPTP) are compositionally biased toward low complexity. The residue at position 1018 (serine 1018) is a Phosphoserine. A compositionally biased stretch (pro residues) spans 1036–1045 (TSIPPKPPGP). Phosphoserine is present on residues serine 1050 and serine 1091. Threonine 1093 carries the post-translational modification Phosphothreonine. 5 positions are modified to phosphoserine: serine 1108, serine 1153, serine 1157, serine 1159, and serine 1190. The residue at position 1198 (threonine 1198) is a Phosphothreonine. Positions 1202 to 1216 (GDDDDDDDDDIGWLG) are enriched in acidic residues.

The protein belongs to the FKBP-type PPIase family. As to quaternary structure, interacts with WIP and actin. Interacts with TBC1D23. In terms of tissue distribution, expressed in brain, with highest levels in the granular cell layer of cerebellum and in the granule cell layer of dentate gyrus.

Its subcellular location is the cytoplasm. The protein localises to the cell projection. It localises to the axon. The protein resides in the early endosome. Its function is as follows. Involved in the transport of early endosomes at the level of transition between microfilament-based and microtubule-based movement. May be involved in the cytoskeletal organization of neuronal growth cones. Seems to be inactive as a PPIase. The chain is FK506-binding protein 15 (Fkbp15) from Mus musculus (Mouse).